Here is a 58-residue protein sequence, read N- to C-terminus: Large ribosomal subunit protein bL32 (58 aa).

Belongs to the bacterial ribosomal protein bL32 family.

The sequence is that of Large ribosomal subunit protein bL32 from Prochlorococcus marinus (strain MIT 9303).